A 260-amino-acid chain; its full sequence is 3-methyl-2-oxobutanoate hydroxymethyltransferase (260 aa).

Mg(2+) is bound by residues D44 and D83. Residues 44-45 (DS), D83, and K113 contribute to the 3-methyl-2-oxobutanoate site. E115 lines the Mg(2+) pocket. Residue E183 is the Proton acceptor of the active site.

Belongs to the PanB family. Homodecamer; pentamer of dimers. Mg(2+) is required as a cofactor.

It is found in the cytoplasm. The catalysed reaction is 3-methyl-2-oxobutanoate + (6R)-5,10-methylene-5,6,7,8-tetrahydrofolate + H2O = 2-dehydropantoate + (6S)-5,6,7,8-tetrahydrofolate. It functions in the pathway cofactor biosynthesis; (R)-pantothenate biosynthesis; (R)-pantoate from 3-methyl-2-oxobutanoate: step 1/2. In terms of biological role, catalyzes the reversible reaction in which hydroxymethyl group from 5,10-methylenetetrahydrofolate is transferred onto alpha-ketoisovalerate to form ketopantoate. In Gloeobacter violaceus (strain ATCC 29082 / PCC 7421), this protein is 3-methyl-2-oxobutanoate hydroxymethyltransferase.